Consider the following 600-residue polypeptide: UvrABC system protein C (600 aa).

The region spanning 15–92 (EKPGCYLMKD…IKKYQPYYNV (78 aa)) is the GIY-YIG domain. The region spanning 197-232 (TSVKQDLTTKMEKASENLEFERAAEIRDQLKYIEET) is the UVR domain.

This sequence belongs to the UvrC family. In terms of assembly, interacts with UvrB in an incision complex.

It localises to the cytoplasm. In terms of biological role, the UvrABC repair system catalyzes the recognition and processing of DNA lesions. UvrC both incises the 5' and 3' sides of the lesion. The N-terminal half is responsible for the 3' incision and the C-terminal half is responsible for the 5' incision. The sequence is that of UvrABC system protein C from Lactobacillus acidophilus (strain ATCC 700396 / NCK56 / N2 / NCFM).